The following is a 290-amino-acid chain: ATP synthase gamma chain (290 aa).

The protein belongs to the ATPase gamma chain family. In terms of assembly, F-type ATPases have 2 components, CF(1) - the catalytic core - and CF(0) - the membrane proton channel. CF(1) has five subunits: alpha(3), beta(3), gamma(1), delta(1), epsilon(1). CF(0) has three main subunits: a, b and c.

The protein localises to the cell inner membrane. In terms of biological role, produces ATP from ADP in the presence of a proton gradient across the membrane. The gamma chain is believed to be important in regulating ATPase activity and the flow of protons through the CF(0) complex. This Dinoroseobacter shibae (strain DSM 16493 / NCIMB 14021 / DFL 12) protein is ATP synthase gamma chain.